Consider the following 160-residue polypeptide: Globin CTT-Y (160 aa).

The N-terminal stretch at 1–16 (MKVLAIFALCIIGALA) is a signal peptide. The Globin domain maps to 17–160 (TPCDDFKIMQ…IRKVINANLE (144 aa)). Residues His74 and His109 each coordinate heme b.

It belongs to the globin family.

The protein is Globin CTT-Y (CTT-Y) of Chironomus thummi piger (Midge).